The primary structure comprises 101 residues: Small ribosomal subunit protein uS14 (101 aa).

Belongs to the universal ribosomal protein uS14 family. As to quaternary structure, part of the 30S ribosomal subunit. Contacts proteins S3 and S10.

In terms of biological role, binds 16S rRNA, required for the assembly of 30S particles and may also be responsible for determining the conformation of the 16S rRNA at the A site. This is Small ribosomal subunit protein uS14 from Escherichia coli O8 (strain IAI1).